The chain runs to 645 residues: Acetyl-coenzyme A synthetase (645 aa).

CoA contacts are provided by residues 190 to 193 and threonine 308; that span reads RGGR. ATP contacts are provided by residues 384-386, 408-413, aspartate 497, and arginine 512; these read GEP and DTWWQT. Position 520 (serine 520) interacts with CoA. Residue arginine 523 coordinates ATP. Positions 534, 536, and 539 each coordinate Mg(2+). Lysine 606 is modified (N6-acetyllysine).

This sequence belongs to the ATP-dependent AMP-binding enzyme family. It depends on Mg(2+) as a cofactor. In terms of processing, acetylated. Deacetylation by the SIR2-homolog deacetylase activates the enzyme.

It carries out the reaction acetate + ATP + CoA = acetyl-CoA + AMP + diphosphate. Functionally, catalyzes the conversion of acetate into acetyl-CoA (AcCoA), an essential intermediate at the junction of anabolic and catabolic pathways. AcsA undergoes a two-step reaction. In the first half reaction, AcsA combines acetate with ATP to form acetyl-adenylate (AcAMP) intermediate. In the second half reaction, it can then transfer the acetyl group from AcAMP to the sulfhydryl group of CoA, forming the product AcCoA. The protein is Acetyl-coenzyme A synthetase of Alkalilimnicola ehrlichii (strain ATCC BAA-1101 / DSM 17681 / MLHE-1).